Reading from the N-terminus, the 644-residue chain is Chaperone protein DnaK (644 aa).

Thr-199 is modified (phosphothreonine; by autocatalysis). Residues 605–644 are disordered; it reads KKSSEGQAAQGQTQSQESTKPVEEGVVDAEFEEVKEEDKK. A compositionally biased stretch (polar residues) spans 609-623; sequence EGQAAQGQTQSQEST. Residues 629–644 are compositionally biased toward acidic residues; the sequence is GVVDAEFEEVKEEDKK.

It belongs to the heat shock protein 70 family.

Acts as a chaperone. The polypeptide is Chaperone protein DnaK (Legionella pneumophila (strain Paris)).